The sequence spans 235 residues: Glutathione S-transferase 1 (235 aa).

The GST N-terminal domain occupies 36-113; that stretch reads EKYTLTYFNG…LLGGRFGLLG (78 aa). Glutathione-binding positions include Tyr-42, Trp-73, Lys-77, Val-85, and 97 to 98; that span reads ES. One can recognise a GST C-terminal domain in the interval 115-235; it reads NDWEEAKIMA…WIKKRPKTYF (121 aa).

Belongs to the GST superfamily. Homodimer.

It catalyses the reaction RX + glutathione = an S-substituted glutathione + a halide anion + H(+). This Onchocerca volvulus protein is Glutathione S-transferase 1 (GST1).